The primary structure comprises 419 residues: 5-methylthioadenosine/S-adenosylhomocysteine deaminase (419 aa).

Zn(2+)-binding residues include histidine 58 and histidine 60. Substrate contacts are provided by glutamate 87 and histidine 179. Histidine 206 contacts Zn(2+). Residues glutamate 209 and aspartate 294 each coordinate substrate. Aspartate 294 is a Zn(2+) binding site.

This sequence belongs to the metallo-dependent hydrolases superfamily. MTA/SAH deaminase family. It depends on Zn(2+) as a cofactor.

It carries out the reaction S-adenosyl-L-homocysteine + H2O + H(+) = S-inosyl-L-homocysteine + NH4(+). The catalysed reaction is S-methyl-5'-thioadenosine + H2O + H(+) = S-methyl-5'-thioinosine + NH4(+). Functionally, catalyzes the deamination of 5-methylthioadenosine and S-adenosyl-L-homocysteine into 5-methylthioinosine and S-inosyl-L-homocysteine, respectively. Is also able to deaminate adenosine. This Pyrococcus furiosus (strain ATCC 43587 / DSM 3638 / JCM 8422 / Vc1) protein is 5-methylthioadenosine/S-adenosylhomocysteine deaminase.